A 385-amino-acid chain; its full sequence is MYSKELGINFFGNESNKKRQLNKIEILKKNIKNLKIFLIIAGTNTSQIPGISAAGINAKSRRKTALADAEFLLEGASKDHKYKLPLLNAGVTPALISHVCSKLINIYPVIVPLGIGAKPYFNHLDVEDRNLGPSNCLTTGKSMTKERVLNLYEKGLAIGKSLQQPVLISESVPGGTTTAQAVMEAFGLQVSNLVGSSLFKAPRELRRKVVKRGLFNANFKANFDSFDVVAAVGDPFQAFSMGLLIGARLAKQPVILSGGSQMLAIILLVLEFLDEKHKDEFIEDVFIATTGWLVKDNSLNDLVNLINEKYDVKLLGLASPLNFKSSKYKELRDYELGHVKEGVGAGGISLLAFLDGFKNEEIVSLCQLNLEMMKDLGQISLEKDC.

It belongs to the UPF0284 family.

The polypeptide is UPF0284 protein A9601_04941 (Prochlorococcus marinus (strain AS9601)).